The chain runs to 66 residues: Large ribosomal subunit protein bL31 (66 aa).

Zn(2+) is bound by residues Cys16, Cys18, Cys36, and Cys39.

This sequence belongs to the bacterial ribosomal protein bL31 family. Type A subfamily. In terms of assembly, part of the 50S ribosomal subunit. Zn(2+) serves as cofactor.

Binds the 23S rRNA. This chain is Large ribosomal subunit protein bL31, found in Thermodesulfovibrio yellowstonii (strain ATCC 51303 / DSM 11347 / YP87).